We begin with the raw amino-acid sequence, 833 residues long: Leucine--tRNA ligase (833 aa).

The short motif at 41-52 (PYPSGAGLHVGH) is the 'HIGH' region element. A 'KMSKS' region motif is present at residues 610-614 (KMSKS). Position 613 (K613) interacts with ATP.

The protein belongs to the class-I aminoacyl-tRNA synthetase family.

It is found in the cytoplasm. It carries out the reaction tRNA(Leu) + L-leucine + ATP = L-leucyl-tRNA(Leu) + AMP + diphosphate. The sequence is that of Leucine--tRNA ligase from Streptococcus mutans serotype c (strain ATCC 700610 / UA159).